Reading from the N-terminus, the 153-residue chain is Large ribosomal subunit protein uL29 (153 aa).

Residues 1 to 83 form a large ribosomal subunit protein uL29 region; sequence MNKELRAKTN…KEQTKQKEIQ (83 aa). Positions 84-153 are unknown; sequence ESVKKIKQLR…NVKAKTKKKG (70 aa). The span at 100–121 shows a compositional bias: basic and acidic residues; it reads NKEKRLANAEKVKAAPKPEQKT. The segment at 100 to 153 is disordered; it reads NKEKRLANAEKVKAAPKPEQKTKKVKKAPKKTETVKPTTNKNKKNVKAKTKKKG. The span at 140–153 shows a compositional bias: basic residues; that stretch reads KNKKNVKAKTKKKG.

The protein belongs to the universal ribosomal protein uL29 family.

This Mycoplasmoides gallisepticum (strain R(low / passage 15 / clone 2)) (Mycoplasma gallisepticum) protein is Large ribosomal subunit protein uL29.